The chain runs to 226 residues: Protein TRI1 (226 aa).

Residues M1–G56 form the DEK-C domain. Residues Q83–S118 are disordered. The segment covering R91 to K110 has biased composition (basic residues). Residue S113 is modified to Phosphoserine. Residues I119–N195 enclose the SWIB/MDM2 domain. Over residues V200–N218 the composition is skewed to basic and acidic residues. The disordered stretch occupies residues V200–G226. Residues K201 and K215 each participate in a glycyl lysine isopeptide (Lys-Gly) (interchain with G-Cter in SUMO) cross-link. Phosphoserine is present on S225.

The protein localises to the cytoplasm. Its subcellular location is the nucleus. It is found in the nucleolus. May be involved in transcription regulation. The sequence is that of Protein TRI1 (TRI1) from Saccharomyces cerevisiae (strain ATCC 204508 / S288c) (Baker's yeast).